Reading from the N-terminus, the 150-residue chain is Large ribosomal subunit protein uL15 (150 aa).

The segment at 1 to 49 (MELHQLKSVSKSRNHKSKVVGRGHGSGLGKTSSRGQKGQKARKSGLTRL) is disordered. The span at 10 to 21 (SKSRNHKSKVVG) shows a compositional bias: basic residues.

The protein belongs to the universal ribosomal protein uL15 family. Part of the 50S ribosomal subunit.

Its function is as follows. Binds to the 23S rRNA. The sequence is that of Large ribosomal subunit protein uL15 from Mycoplasma genitalium (strain ATCC 33530 / DSM 19775 / NCTC 10195 / G37) (Mycoplasmoides genitalium).